The primary structure comprises 400 residues: Argininosuccinate synthase (400 aa).

ATP-binding positions include 10 to 18 and A38; that span reads AYSGGVDTS. Y89 contacts L-citrulline. ATP is bound at residue G119. L-aspartate-binding residues include T121, N125, and D126. N125 contributes to the L-citrulline binding site. R129, S177, S186, E262, and Y274 together coordinate L-citrulline.

It belongs to the argininosuccinate synthase family. Type 1 subfamily. As to quaternary structure, homotetramer.

Its subcellular location is the cytoplasm. The catalysed reaction is L-citrulline + L-aspartate + ATP = 2-(N(omega)-L-arginino)succinate + AMP + diphosphate + H(+). It functions in the pathway amino-acid biosynthesis; L-arginine biosynthesis; L-arginine from L-ornithine and carbamoyl phosphate: step 2/3. The protein is Argininosuccinate synthase of Prochlorococcus marinus (strain NATL2A).